The chain runs to 566 residues: Phenylalanine--tRNA ligase beta subunit (566 aa).

Residues 287-362 (YFQEEVEFNV…IGEGLSSFNP (76 aa)) form the B5 domain. Mg(2+)-binding residues include aspartate 340, aspartate 346, glutamate 349, and aspartate 350.

The protein belongs to the phenylalanyl-tRNA synthetase beta subunit family. Type 2 subfamily. Tetramer of two alpha and two beta subunits. It depends on Mg(2+) as a cofactor.

The protein localises to the cytoplasm. The catalysed reaction is tRNA(Phe) + L-phenylalanine + ATP = L-phenylalanyl-tRNA(Phe) + AMP + diphosphate + H(+). The sequence is that of Phenylalanine--tRNA ligase beta subunit from Borreliella burgdorferi (strain ATCC 35210 / DSM 4680 / CIP 102532 / B31) (Borrelia burgdorferi).